The sequence spans 335 residues: ATP-dependent 6-phosphofructokinase (335 aa).

Gly11 contributes to the ATP binding site. 21–25 (RAVVR) contacts ADP. ATP contacts are provided by residues 72–73 (RY) and 102–105 (GDGS). A Mg(2+)-binding site is contributed by Asp103. Substrate is bound at residue 125–127 (TID). The active-site Proton acceptor is the Asp127. Residue Arg154 participates in ADP binding. Residues Arg162 and 169 to 171 (MGR) each bind substrate. ADP is bound by residues 185 to 187 (GAD) and 213 to 215 (KKH). Substrate-binding positions include Glu222, Arg244, and 250–253 (HIQR).

It belongs to the phosphofructokinase type A (PFKA) family. ATP-dependent PFK group I subfamily. Prokaryotic clade 'B1' sub-subfamily. In terms of assembly, homotetramer. The cofactor is Mg(2+).

The protein localises to the cytoplasm. It catalyses the reaction beta-D-fructose 6-phosphate + ATP = beta-D-fructose 1,6-bisphosphate + ADP + H(+). It participates in carbohydrate degradation; glycolysis; D-glyceraldehyde 3-phosphate and glycerone phosphate from D-glucose: step 3/4. With respect to regulation, allosterically activated by ADP and other diphosphonucleosides, and allosterically inhibited by phosphoenolpyruvate. Functionally, catalyzes the phosphorylation of D-fructose 6-phosphate to fructose 1,6-bisphosphate by ATP, the first committing step of glycolysis. This is ATP-dependent 6-phosphofructokinase from Streptococcus pneumoniae (strain ATCC BAA-255 / R6).